We begin with the raw amino-acid sequence, 367 residues long: Germination protease (367 aa).

Residues M1–D15 constitute a propeptide that is removed on maturation.

The protein belongs to the peptidase A25 family. In terms of assembly, homotetramer. In terms of processing, autoproteolytically processed. The inactive tetrameric zymogen termed p46 autoprocesses to a smaller form termed p41, which is active only during spore germination.

The catalysed reaction is Endopeptidase action with P4 Glu or Asp, P1 preferably Glu &gt; Asp, P1' hydrophobic and P2' Ala.. Functionally, initiates the rapid degradation of small, acid-soluble proteins during spore germination. The chain is Germination protease from Bacillus cereus (strain AH187).